The sequence spans 407 residues: Eukaryotic initiation factor 4A-II (407 aa).

Residues 1-22 form a disordered region; the sequence is MSGGSADYNREHGGPEGMDPDG. The short motif at 33-61 is the Q motif element; that stretch reads DNFDDMNLKESLLRGIYAYGFEKPSAIQQ. The region spanning 64 to 235 is the Helicase ATP-binding domain; that stretch reads IIPCIKGYDV…KKFMRDPIRI (172 aa). Residue 77 to 84 coordinates ATP; the sequence is AQSGTGKT. A Phosphothreonine modification is found at Thr159. Residues 183 to 186 carry the DEAD box motif; it reads DEAD. Positions 246 to 407 constitute a Helicase C-terminal domain; it reads GIKQFYINVE…EMPMNVADLI (162 aa).

This sequence belongs to the DEAD box helicase family. eIF4A subfamily. As to quaternary structure, eIF4F is a multi-subunit complex, the composition of which varies with external and internal environmental conditions. It is composed of at least EIF4A, EIF4E and EIF4G1/EIFFG3. Interacts with EIF4E. May interact with NOM1.

The enzyme catalyses ATP + H2O = ADP + phosphate + H(+). Functionally, ATP-dependent RNA helicase which is a subunit of the eIF4F complex involved in cap recognition and is required for mRNA binding to ribosome. In the current model of translation initiation, eIF4A unwinds RNA secondary structures in the 5'-UTR of mRNAs which is necessary to allow efficient binding of the small ribosomal subunit, and subsequent scanning for the initiator codon. This chain is Eukaryotic initiation factor 4A-II (EIF4A2), found in Bos taurus (Bovine).